We begin with the raw amino-acid sequence, 117 residues long: Large ribosomal subunit protein bL20 (117 aa).

It belongs to the bacterial ribosomal protein bL20 family.

Functionally, binds directly to 23S ribosomal RNA and is necessary for the in vitro assembly process of the 50S ribosomal subunit. It is not involved in the protein synthesizing functions of that subunit. The sequence is that of Large ribosomal subunit protein bL20 from Rickettsia massiliae (strain Mtu5).